Reading from the N-terminus, the 291-residue chain is MEKLLERVNHILEALPYITKYSGKTVVIKYGGAAMAKADLKESFAKDIVLLKYVGIHPVIVHGGGPEINRLLDSLKIPTEFIHGHRVTDTQTMEVVEMVLTGKVNKQIVSMINSQGGKAVGISGKDGNLAKAVKAPIEIELEGKAKQLFDVGLVGRIESINPEILHNLQKEGFIPVISPVAESVEGDSLNINADTFAGEIAGALKAEKLILLTDTEGILIDGKLATGLSRGKMKEYIRKGEISGGMIPKVECCLAAIDQGVNRTHIIDGRVSHSILIEIFTNQGIGSLIES.

Residues 64–65 (GG), R86, and N190 each bind substrate.

This sequence belongs to the acetylglutamate kinase family. ArgB subfamily.

It localises to the cytoplasm. It catalyses the reaction N-acetyl-L-glutamate + ATP = N-acetyl-L-glutamyl 5-phosphate + ADP. Its pathway is amino-acid biosynthesis; L-arginine biosynthesis; N(2)-acetyl-L-ornithine from L-glutamate: step 2/4. Its function is as follows. Catalyzes the ATP-dependent phosphorylation of N-acetyl-L-glutamate. In Leptospira borgpetersenii serovar Hardjo-bovis (strain JB197), this protein is Acetylglutamate kinase.